The following is a 439-amino-acid chain: MPTVNVIGAGLAGSEAAWQIAQAGVDVNLYEMRPVKMTPAHHTSNFAELVCTNSLRANQITNAVGLLKEEMRQLHSIIIQSADATAVPAGGALAVDREPFSELVTQKLTSNSHIHVVNEELSAFPDGITVVATGPLTAPGLAQAIVDLNGEAGLSFFDAAAPILDANTINEDIVYKKSRYDRGEAAYLNCPMTKDEFLAFYQALVSAEVAEGHDFEKMTVFEGCMPIEVMAKRGIKTMLFGPLKPVGLEDPRTGKEPYAVVQLRQDNAAASLYNMVGFQTHLKWGEQKRVFRLIPGLENVQIVRYGVMHRNTFMKSPVVLEPTYASKRRPDLFFAGQMTGVEGYVESAASGLIAGINATRMALGETPVIFPETTAMGSMAHYITHTSAHHFQPMNANFGIMPALTVKIRNKKERNQQLADRALKDLATFQAGMNRVEQV.

Position 8–13 (8–13) interacts with FAD; that stretch reads GAGLAG.

The protein belongs to the MnmG family. TrmFO subfamily. FAD serves as cofactor.

The protein localises to the cytoplasm. The enzyme catalyses uridine(54) in tRNA + (6R)-5,10-methylene-5,6,7,8-tetrahydrofolate + NADH + H(+) = 5-methyluridine(54) in tRNA + (6S)-5,6,7,8-tetrahydrofolate + NAD(+). The catalysed reaction is uridine(54) in tRNA + (6R)-5,10-methylene-5,6,7,8-tetrahydrofolate + NADPH + H(+) = 5-methyluridine(54) in tRNA + (6S)-5,6,7,8-tetrahydrofolate + NADP(+). Its function is as follows. Catalyzes the folate-dependent formation of 5-methyl-uridine at position 54 (M-5-U54) in all tRNAs. The polypeptide is Methylenetetrahydrofolate--tRNA-(uracil-5-)-methyltransferase TrmFO (Lacticaseibacillus paracasei (strain ATCC 334 / BCRC 17002 / CCUG 31169 / CIP 107868 / KCTC 3260 / NRRL B-441) (Lactobacillus paracasei)).